A 451-amino-acid polypeptide reads, in one-letter code: Uronate isomerase (451 aa).

This sequence belongs to the metallo-dependent hydrolases superfamily. Uronate isomerase family.

The catalysed reaction is D-glucuronate = D-fructuronate. It catalyses the reaction aldehydo-D-galacturonate = keto-D-tagaturonate. It functions in the pathway carbohydrate metabolism; pentose and glucuronate interconversion. This Thermotoga petrophila (strain ATCC BAA-488 / DSM 13995 / JCM 10881 / RKU-1) protein is Uronate isomerase.